We begin with the raw amino-acid sequence, 282 residues long: Biotin synthase (282 aa).

Positions 1–228 (MQEIFLCSIS…NARLMVAGGR (228 aa)) constitute a Radical SAM core domain. [4Fe-4S] cluster contacts are provided by C17, C21, and C24. The [2Fe-2S] cluster site is built by C61, C96, C154, and R221.

It belongs to the radical SAM superfamily. Biotin synthase family. In terms of assembly, homodimer. It depends on [4Fe-4S] cluster as a cofactor. [2Fe-2S] cluster serves as cofactor.

The enzyme catalyses (4R,5S)-dethiobiotin + (sulfur carrier)-SH + 2 reduced [2Fe-2S]-[ferredoxin] + 2 S-adenosyl-L-methionine = (sulfur carrier)-H + biotin + 2 5'-deoxyadenosine + 2 L-methionine + 2 oxidized [2Fe-2S]-[ferredoxin]. It participates in cofactor biosynthesis; biotin biosynthesis; biotin from 7,8-diaminononanoate: step 2/2. In terms of biological role, catalyzes the conversion of dethiobiotin (DTB) to biotin by the insertion of a sulfur atom into dethiobiotin via a radical-based mechanism. This is Biotin synthase from Helicobacter pylori (strain P12).